A 255-amino-acid chain; its full sequence is Ribonuclease HII (255 aa).

Residues 72 to 255 form the RNase H type-2 domain; that stretch reads AIICGIDEVG…KSFEPIKSLL (184 aa). A divalent metal cation-binding residues include D78, E79, and D170.

This sequence belongs to the RNase HII family. Mn(2+) is required as a cofactor. The cofactor is Mg(2+).

Its subcellular location is the cytoplasm. It catalyses the reaction Endonucleolytic cleavage to 5'-phosphomonoester.. Functionally, endonuclease that specifically degrades the RNA of RNA-DNA hybrids. The sequence is that of Ribonuclease HII from Staphylococcus aureus (strain bovine RF122 / ET3-1).